The chain runs to 409 residues: LIM/homeobox protein ttx-3 (409 aa).

2 consecutive LIM zinc-binding domains span residues 108 to 169 (NQCC…RYQK) and 171 to 232 (CRKC…VRST). Disordered regions lie at residues 245-299 (AVVA…RTSF) and 372-409 (MNPP…YTHL). Positions 247–267 (VAPPPPPPTTTTAPPPAAPEQ) are enriched in pro residues. A DNA-binding region (homeobox) is located at residues 292 to 351 (SKRMRTSFKHHQLRAMKTYFALNHNPDAKDLKQLAAKTNLTKRVLQVWFQNARAKYRREL). The segment covering 382–409 (GHSTDGYQLNTPPLSSEIYSPNSNYTHL) has biased composition (polar residues).

In terms of tissue distribution, expressed in the AIA, AIN and AIY interneurons, and in the NSM neurons. Expressed also in ADL and ASI sensory neurons in 60-70% of L2 larvae. Expression is also detected in head muscles of embryos and some early larvae but not late larvae or adults.

Its subcellular location is the nucleus. The protein localises to the perikaryon. It localises to the cell projection. It is found in the axon. Functionally, transcription factor. Binds to a sequence motif, 5'-TTATTGGCTTCGTTAA-3', which may be involved in AIY interneuron function, in the regulatory elements of target genes; binding is more efficient, in vitro, together with homeobox protein ceh-10. Required for specification of the AIA and AIY interneurons and the NSM neurons. Positively regulates the expression of a number of genes including ceh-10, ceh-23, kal-1, hen-1, ser-2, unc-17 and sra-11 in AIY neurons, and cat-4, flp-4, bas-1, ptps-1 and mgl-1 in NSM neurons. In concert with WNT/beta-catenin signaling, initiates expression of homeobox ceh-10 in AIY, but not in the sister cells, SMDD motor neurons. Also acts in an autoregulatory feedback loop to maintain its own expression. Plays a role in the thermotactic response, olfactory imprinting, regulation of longevity, control of dauer formation and axon outgrowth and pathfinding. Not required for normal chemosensory behavior. The protein is LIM/homeobox protein ttx-3 of Caenorhabditis elegans.